The sequence spans 310 residues: Glutaminase 1 (310 aa).

Residues serine 66, asparagine 117, glutamate 161, asparagine 168, tyrosine 192, tyrosine 244, and valine 262 each coordinate substrate. N6-acetyllysine is present on lysine 294.

The protein belongs to the glutaminase family. Homotetramer.

The catalysed reaction is L-glutamine + H2O = L-glutamate + NH4(+). This chain is Glutaminase 1, found in Escherichia coli O6:H1 (strain CFT073 / ATCC 700928 / UPEC).